The chain runs to 198 residues: Transcriptional regulator GfcR (198 aa).

Belongs to the purine/pyrimidine phosphoribosyltransferase family. GfcR subfamily.

In Methanosphaera stadtmanae (strain ATCC 43021 / DSM 3091 / JCM 11832 / MCB-3), this protein is Transcriptional regulator GfcR.